We begin with the raw amino-acid sequence, 1722 residues long: Signal-induced proliferation-associated 1-like protein 2 (1722 aa).

Residues 1–12 (MSDPRQSQEEKH) show a composition bias toward basic and acidic residues. Disordered stretches follow at residues 1–29 (MSDP…RIMQ) and 42–72 (NGNM…PAVP). Positions 45 to 56 (MGPTTSLNASNS) are enriched in polar residues. Position 148 is a phosphoserine (serine 148). The span at 360-377 (GASAASQTQMPTGQTGNC) shows a compositional bias: polar residues. Positions 360 to 401 (GASAASQTQMPTGQTGNCESPLGSKEDLNSKENLDADEGDGK) are disordered. Phosphoserine is present on residues serine 379 and serine 383. Basic and acidic residues predominate over residues 383–401 (SKEDLNSKENLDADEGDGK). One can recognise a Rap-GAP domain in the interval 595–812 (LLKLDEQGLS…RTRQEYLKDL (218 aa)). One can recognise a PDZ domain in the interval 950–1026 (EMTLRRNGLG…VKVVIIQPHD (77 aa)). Serine 1029 is modified (phosphoserine). 2 disordered regions span residues 1067–1245 (HRVP…FGSG) and 1330–1360 (EGSM…SKSS). Composition is skewed to low complexity over residues 1093 to 1102 (QQLLQQAQAA) and 1119 to 1130 (SSPSNQSSSSDP). 2 stretches are compositionally biased toward basic and acidic residues: residues 1164 to 1183 (DGAR…ETKW) and 1194 to 1217 (YKER…HIGD). Residues 1219–1236 (SCSSHSSSNTLSSNTSSN) show a composition bias toward low complexity. Position 1244 is a phosphoserine (serine 1244). Low complexity predominate over residues 1337–1360 (SEISSHSSGSHHSGSPSAHCSKSS). Serine 1461, serine 1472, serine 1478, serine 1488, serine 1549, serine 1552, and serine 1591 each carry phosphoserine. A coiled-coil region spans residues 1654–1712 (LTGKVNQLELILRQLQTDLRKEKQDKAVLQAEVQHLRQDNMRLQEESQTATAQLRKFTE).

This chain is Signal-induced proliferation-associated 1-like protein 2 (SIPA1L2), found in Homo sapiens (Human).